The primary structure comprises 453 residues: HTH-type pyridoxine biosynthesis transcriptional regulator PdxR (453 aa).

The 69-residue stretch at 15–83 folds into the HTH gntR-type domain; that stretch reads TSIPTQLTEQ…RGSGTTINPD (69 aa). The H-T-H motif DNA-binding region spans 43–62; sequence SRSLSTQLGVSRGSVVTAYD.

In the C-terminal section; belongs to the class-I pyridoxal-phosphate-dependent aminotransferase family. It depends on pyridoxal 5'-phosphate as a cofactor.

Its function is as follows. May have a regulatory function in pyridoxine biosynthesis. Is said to also have an aminotransferase activity in valine biosynthesis as a double inactivation of ilvE and pdxR results in an auxotrophic requirement for valine. This is HTH-type pyridoxine biosynthesis transcriptional regulator PdxR (pdxR) from Corynebacterium glutamicum (strain ATCC 13032 / DSM 20300 / JCM 1318 / BCRC 11384 / CCUG 27702 / LMG 3730 / NBRC 12168 / NCIMB 10025 / NRRL B-2784 / 534).